A 59-amino-acid chain; its full sequence is Sec-independent protein translocase protein TatA (59 aa).

A helical membrane pass occupies residues 1–21; sequence MGRLGLTEILVIVGIVILLFG.

It belongs to the TatA/E family. In terms of assembly, forms a complex with TatC.

It is found in the cell inner membrane. Functionally, part of the twin-arginine translocation (Tat) system that transports large folded proteins containing a characteristic twin-arginine motif in their signal peptide across membranes. TatA could form the protein-conducting channel of the Tat system. This chain is Sec-independent protein translocase protein TatA, found in Flavobacterium johnsoniae (strain ATCC 17061 / DSM 2064 / JCM 8514 / BCRC 14874 / CCUG 350202 / NBRC 14942 / NCIMB 11054 / UW101) (Cytophaga johnsonae).